Reading from the N-terminus, the 201-residue chain is Small ribosomal subunit protein uS4 (201 aa).

The region spanning 91–151 (SRLDNVVYRA…DKSINTLPFE (61 aa)) is the S4 RNA-binding domain.

It belongs to the universal ribosomal protein uS4 family. Part of the 30S ribosomal subunit. Contacts protein S5. The interaction surface between S4 and S5 is involved in control of translational fidelity.

Functionally, one of the primary rRNA binding proteins, it binds directly to 16S rRNA where it nucleates assembly of the body of the 30S subunit. With S5 and S12 plays an important role in translational accuracy. In Mycolicibacterium gilvum (strain PYR-GCK) (Mycobacterium gilvum (strain PYR-GCK)), this protein is Small ribosomal subunit protein uS4.